Consider the following 421-residue polypeptide: UDP-N-acetylglucosamine 1-carboxyvinyltransferase (421 aa).

23-24 (KN) serves as a coordination point for phosphoenolpyruvate. Arginine 92 is a binding site for UDP-N-acetyl-alpha-D-glucosamine. Catalysis depends on cysteine 116, which acts as the Proton donor. Residue cysteine 116 is modified to 2-(S-cysteinyl)pyruvic acid O-phosphothioketal. UDP-N-acetyl-alpha-D-glucosamine-binding positions include 121-125 (RPVDL), 161-164 (KVSV), aspartate 306, and isoleucine 328.

It belongs to the EPSP synthase family. MurA subfamily.

The protein localises to the cytoplasm. The enzyme catalyses phosphoenolpyruvate + UDP-N-acetyl-alpha-D-glucosamine = UDP-N-acetyl-3-O-(1-carboxyvinyl)-alpha-D-glucosamine + phosphate. It participates in cell wall biogenesis; peptidoglycan biosynthesis. Cell wall formation. Adds enolpyruvyl to UDP-N-acetylglucosamine. The protein is UDP-N-acetylglucosamine 1-carboxyvinyltransferase of Vibrio campbellii (strain ATCC BAA-1116).